A 602-amino-acid polypeptide reads, in one-letter code: T-box transcription factor TBX15 (602 aa).

Residues 43 to 95 are disordered; that stretch reads SMEALSPAGPLGDTDDPATHGLEPHPDSEQSTGSDSEVLTERTSCSFSTHTDL. Residues 71–94 show a composition bias toward polar residues; the sequence is EQSTGSDSEVLTERTSCSFSTHTD. A DNA-binding region (T-box) is located at residues 122–304; sequence LWKRFHDIGT…RNPFAKGFRD (183 aa). A Phosphothreonine modification is found at T330. 2 disordered regions span residues 338 to 369 and 425 to 444; these read QKQQ…LSPS and QSGT…QRTP. The segment covering 346 to 369 has biased composition (low complexity); the sequence is GTSPTTSSTGTPSPSASSHLLSPS.

Can form a heterodimer with TBX18.

The protein resides in the nucleus. Its function is as follows. Probable transcriptional regulator involved in the development of the skeleton of the limb, vertebral column and head. Acts by controlling the number of mesenchymal precursor cells and chondrocytes. In Mus musculus (Mouse), this protein is T-box transcription factor TBX15 (Tbx15).